The sequence spans 309 residues: Methionine synthase (309 aa).

Zn(2+) contacts are provided by His201, Cys203, Glu224, and Cys285.

The protein belongs to the archaeal MetE family. The cofactor is Zn(2+).

It participates in amino-acid biosynthesis; L-methionine biosynthesis via de novo pathway. With respect to regulation, is activated by phosphates. Its function is as follows. Catalyzes the transfer of a methyl group to L-homocysteine resulting in methionine formation. Can use methylcobalamin and methylcobinamide as methyl donors, but methylcobalamin is not considered to be the physiological substrate. It was proposed that, in vivo, a so-far-unidentified enzyme catalyzes methyltransfer from 5-methyltetrahydromethanopterin (5-CH3-H4MPT) to a corrinoid protein, and that the MetE gene product catalyzes the further transfer to L-homocysteine. Is not active with L-cysteine, coenzyme M, coenzyme B, glutathione or dithiothreitol as substrate. This Methanothermobacter marburgensis (strain ATCC BAA-927 / DSM 2133 / JCM 14651 / NBRC 100331 / OCM 82 / Marburg) (Methanobacterium thermoautotrophicum) protein is Methionine synthase.